Here is a 427-residue protein sequence, read N- to C-terminus: Serine--tRNA ligase (427 aa).

231 to 233 (TAE) lines the L-serine pocket. ATP is bound at residue 262–264 (RSE). An L-serine-binding site is contributed by Glu285. 349 to 352 (EISS) contacts ATP. Position 385 (Ser385) interacts with L-serine.

This sequence belongs to the class-II aminoacyl-tRNA synthetase family. Type-1 seryl-tRNA synthetase subfamily. In terms of assembly, homodimer. The tRNA molecule binds across the dimer.

It localises to the cytoplasm. It carries out the reaction tRNA(Ser) + L-serine + ATP = L-seryl-tRNA(Ser) + AMP + diphosphate + H(+). The enzyme catalyses tRNA(Sec) + L-serine + ATP = L-seryl-tRNA(Sec) + AMP + diphosphate + H(+). It participates in aminoacyl-tRNA biosynthesis; selenocysteinyl-tRNA(Sec) biosynthesis; L-seryl-tRNA(Sec) from L-serine and tRNA(Sec): step 1/1. Catalyzes the attachment of serine to tRNA(Ser). Is also able to aminoacylate tRNA(Sec) with serine, to form the misacylated tRNA L-seryl-tRNA(Sec), which will be further converted into selenocysteinyl-tRNA(Sec). The sequence is that of Serine--tRNA ligase from Brucella melitensis biotype 2 (strain ATCC 23457).